Reading from the N-terminus, the 146-residue chain is Hemoglobin subunit beta (146 aa).

N-acetylvaline is present on valine 1. Positions 2–146 (HLSGGEKSAV…VAHALGHKYH (145 aa)) constitute a Globin domain. Position 12 is a phosphothreonine (threonine 12). Residue lysine 59 is modified to N6-acetyllysine. Residue histidine 63 coordinates heme b. Lysine 82 carries the N6-acetyllysine modification. Heme b is bound at residue histidine 92. The residue at position 93 (cysteine 93) is an S-nitrosocysteine. Lysine 144 carries the N6-acetyllysine modification.

Belongs to the globin family. Heterotetramer of two alpha chains and two beta chains. As to expression, red blood cells.

In terms of biological role, involved in oxygen transport from the lung to the various peripheral tissues. This is Hemoglobin subunit beta (HBB) from Ornithorhynchus anatinus (Duckbill platypus).